Here is a 1332-residue protein sequence, read N- to C-terminus: DEMETER-like protein 2 (1332 aa).

The segment covering 1 to 23 (MEVEGEVREKEARVKGRQPETEV) has biased composition (basic and acidic residues). Disordered stretches follow at residues 1–29 (MEVE…GLPQ), 137–242 (VSTS…TSEE), and 280–317 (VEGS…KKTD). Polar residues predominate over residues 137–153 (VSTSTQRTEPESPQITL). Residues 223-236 (SKAGIKKSSIAATA) are compositionally biased toward low complexity. Basic residues predominate over residues 301–312 (PKGRRGQRRSNG). The interval 497–595 (KVQLDPETSR…AYMDLAAEFP (99 aa)) is DEMETER. A compositionally biased stretch (polar residues) spans 739 to 753 (HQQDPESTIQTQDQQ). Positions 739–810 (HQQDPESTIQ…GGRKRERTER (72 aa)) are disordered. Basic residues predominate over residues 763-777 (KNRKKPTTSKPKKKS). Positions 787 to 810 (KSVDWDSLRKEAESGGRKRERTER) are enriched in basic and acidic residues. [4Fe-4S] cluster is bound by residues C970, C977, C980, and C986.

This sequence belongs to the DNA glycosylase family. DEMETER subfamily. [4Fe-4S] cluster is required as a cofactor.

It is found in the nucleus. In terms of biological role, potential transcriptional activator that may act by nicking the target promoter. Catalyzes the release of 5-methylcytosine (5-meC) from DNA by a glycosylase/lyase mechanism. In Arabidopsis thaliana (Mouse-ear cress), this protein is DEMETER-like protein 2 (DML2).